A 64-amino-acid chain; its full sequence is Metallothionein-A (64 aa).

Belongs to the metallothionein superfamily. Type 4 family.

In terms of biological role, metallothioneins have a high content of cysteine residues that bind various heavy metals. The chain is Metallothionein-A (MTA) from Strongylocentrotus purpuratus (Purple sea urchin).